Reading from the N-terminus, the 593-residue chain is UvrABC system protein C (593 aa).

One can recognise a GIY-YIG domain in the interval 13-91; it reads TTPGVYMMKD…IKEYRPKYNV (79 aa). Positions 202-237 constitute a UVR domain; the sequence is DEIVEELKKKMFEYADNLMFEKAQEIKNKITSLEQI.

The protein belongs to the UvrC family. As to quaternary structure, interacts with UvrB in an incision complex.

Its subcellular location is the cytoplasm. Its function is as follows. The UvrABC repair system catalyzes the recognition and processing of DNA lesions. UvrC both incises the 5' and 3' sides of the lesion. The N-terminal half is responsible for the 3' incision and the C-terminal half is responsible for the 5' incision. This is UvrABC system protein C from Caldicellulosiruptor saccharolyticus (strain ATCC 43494 / DSM 8903 / Tp8T 6331).